A 31-amino-acid chain; its full sequence is Cyclotide psybry B (31 aa).

The segment at residues 1-31 (GFNPCGETCWNKPTCHAPGCTCSIANICVRN) is a cross-link (cyclopeptide (Gly-Asn)). 3 disulfide bridges follow: cysteine 5–cysteine 20, cysteine 9–cysteine 22, and cysteine 15–cysteine 28.

In terms of processing, this is a cyclic peptide.

Probably participates in a plant defense mechanism. This is Cyclotide psybry B from Psychotria brachyceras.